A 244-amino-acid chain; its full sequence is MRDRISAFLEEKQGLSVNSKQSYKYDLEQFLDMVGERISETSLKIYQAQLANLKISAQKRKISACNQFLYFLYQKGEVDSFYRLELAKQAEKKTEKPEILYLDSFWQESDHPEGRLLALLILEMGLLPSEILAIKVADINLDFQVLRISKASQQRIVTIPTALLSELEPLMGQTYLFERGGKPYSRQWAFRQLESFVKEKGFPSLSAQVLREQFILRQIENKVDLYEIAKKLGLKTVLTLEKYR.

The 73-residue stretch at 1–73 (MRDRISAFLE…ACNQFLYFLY (73 aa)) folds into the Core-binding (CB) domain. Residues 90–244 (AEKKTEKPEI…KTVLTLEKYR (155 aa)) form the Tyr recombinase domain. Residues Lys-150 and Arg-211 contribute to the active site. Tyr-243 functions as the O-(3'-phospho-DNA)-tyrosine intermediate in the catalytic mechanism.

Belongs to the 'phage' integrase family. XerD-like subfamily.

The protein resides in the cytoplasm. Putative tyrosine recombinase. Not involved in the cutting and rejoining of the recombining DNA molecules on dif(SL) site. This chain is Tyrosine recombinase XerD-like, found in Streptococcus pneumoniae (strain CGSP14).